The sequence spans 615 residues: Proteasome-associated ATPase (615 aa).

Positions Met-1–Ala-27 are disordered. Residues Ser-22–Gln-99 are a coiled coil. Position 302 to 307 (Gly-302 to Leu-307) interacts with ATP. Residues Tyr-614–Leu-615 are docks into pockets in the proteasome alpha-ring.

The protein belongs to the AAA ATPase family. In terms of assembly, homohexamer. Assembles into a hexameric ring structure that caps the 20S proteasome core. Strongly interacts with the prokaryotic ubiquitin-like protein Pup through a hydrophobic interface; the interacting region of ARC lies in its N-terminal coiled-coil domain. There is one Pup binding site per ARC hexamer ring. Upon ATP-binding, the C-terminus of ARC interacts with the alpha-rings of the proteasome core, possibly by binding to the intersubunit pockets.

Its pathway is protein degradation; proteasomal Pup-dependent pathway. In terms of biological role, ATPase which is responsible for recognizing, binding, unfolding and translocation of pupylated proteins into the bacterial 20S proteasome core particle. May be essential for opening the gate of the 20S proteasome via an interaction with its C-terminus, thereby allowing substrate entry and access to the site of proteolysis. Thus, the C-termini of the proteasomal ATPase may function like a 'key in a lock' to induce gate opening and therefore regulate proteolysis. The protein is Proteasome-associated ATPase of Mycolicibacterium vanbaalenii (strain DSM 7251 / JCM 13017 / BCRC 16820 / KCTC 9966 / NRRL B-24157 / PYR-1) (Mycobacterium vanbaalenii).